Reading from the N-terminus, the 26-residue chain is Guentherin (26 aa).

In terms of tissue distribution, expressed by the skin glands.

It localises to the secreted. Antimicrobial peptide. Active against the Gram-positive bacteria S.aureus FDA209P (MIC=35.5 ug/ml) and B.subtilis ATCC 6633 (MIC&gt;64 ug/ml), but not active against the Gram-negative bacterium E.coli or the fungus C.albicans. The protein is Guentherin of Sylvirana guentheri (Gunther's frog).